We begin with the raw amino-acid sequence, 208 residues long: Large ribosomal subunit protein uL4 (208 aa).

The segment at 45–85 (RQGTHKAKTRAQVRGGGRKPYRQKGTGNARQGSTRSPLMIG) is disordered. Over residues 46-66 (QGTHKAKTRAQVRGGGRKPYR) the composition is skewed to basic residues. Residues 69–80 (GTGNARQGSTRS) show a composition bias toward polar residues.

This sequence belongs to the universal ribosomal protein uL4 family. In terms of assembly, part of the 50S ribosomal subunit.

In terms of biological role, one of the primary rRNA binding proteins, this protein initially binds near the 5'-end of the 23S rRNA. It is important during the early stages of 50S assembly. It makes multiple contacts with different domains of the 23S rRNA in the assembled 50S subunit and ribosome. Its function is as follows. Forms part of the polypeptide exit tunnel. This is Large ribosomal subunit protein uL4 from Chlorobium phaeobacteroides (strain DSM 266 / SMG 266 / 2430).